The following is a 184-amino-acid chain: uncharacterized protein (184 aa).

A helical membrane pass occupies residues 35 to 55 (LSFLIYILYTFSISGLSTFVI).

The protein resides in the membrane. This is an uncharacterized protein from Schizosaccharomyces pombe (strain 972 / ATCC 24843) (Fission yeast).